The primary structure comprises 22 residues: Caerin-3.2 (22 aa).

At Lys-22 the chain carries Lysine amide.

As to expression, expressed by the skin parotoid and/or rostral glands.

The protein resides in the secreted. Functionally, antibacterial peptide, that adopts an alpha helical conformation which can disrupt bacterial membranes. Each caerin displays a different antimicrobial specificity. In Ranoidea caerulea (Green tree frog), this protein is Caerin-3.2.